The following is an 848-amino-acid chain: Translation initiation factor IF-2 (848 aa).

Positions 1–20 (MNESKGAVDSGLMSGKTERT) are disordered. In terms of domain architecture, tr-type G spans 346–516 (PRAPVVTVMG…LLMAELLELK (171 aa)). A G1 region spans residues 355–362 (GHVDHGKT). 355 to 362 (GHVDHGKT) contributes to the GTP binding site. The G2 stretch occupies residues 380–384 (GITQH). A G3 region spans residues 402–405 (DTPG). Residues 402 to 406 (DTPGH) and 456 to 459 (NKID) each bind GTP. Positions 456 to 459 (NKID) are G4. A G5 region spans residues 492–494 (SAK).

The protein belongs to the TRAFAC class translation factor GTPase superfamily. Classic translation factor GTPase family. IF-2 subfamily.

It is found in the cytoplasm. Functionally, one of the essential components for the initiation of protein synthesis. Protects formylmethionyl-tRNA from spontaneous hydrolysis and promotes its binding to the 30S ribosomal subunits. Also involved in the hydrolysis of GTP during the formation of the 70S ribosomal complex. In Ehrlichia canis (strain Jake), this protein is Translation initiation factor IF-2.